The sequence spans 399 residues: Acetate kinase (399 aa).

Residue asparagine 7 coordinates Mg(2+). Residue lysine 14 participates in ATP binding. Arginine 90 serves as a coordination point for substrate. Catalysis depends on aspartate 147, which acts as the Proton donor/acceptor. ATP is bound by residues histidine 207–glycine 211, aspartate 282–arginine 284, and glycine 330–asparagine 334. A Mg(2+)-binding site is contributed by glutamate 385.

Belongs to the acetokinase family. In terms of assembly, homodimer. Requires Mg(2+) as cofactor. Mn(2+) serves as cofactor.

The protein localises to the cytoplasm. The catalysed reaction is acetate + ATP = acetyl phosphate + ADP. It participates in metabolic intermediate biosynthesis; acetyl-CoA biosynthesis; acetyl-CoA from acetate: step 1/2. Functionally, catalyzes the formation of acetyl phosphate from acetate and ATP. Can also catalyze the reverse reaction. This Caldicellulosiruptor bescii (strain ATCC BAA-1888 / DSM 6725 / KCTC 15123 / Z-1320) (Anaerocellum thermophilum) protein is Acetate kinase.